Consider the following 246-residue polypeptide: Orotidine 5'-phosphate decarboxylase (246 aa).

Residues aspartate 22, lysine 44, 71-80 (DLKYHDIPHT), threonine 130, arginine 191, glutamine 201, glycine 221, and arginine 222 contribute to the substrate site. The active-site Proton donor is the lysine 73.

This sequence belongs to the OMP decarboxylase family. Type 1 subfamily. Homodimer.

It catalyses the reaction orotidine 5'-phosphate + H(+) = UMP + CO2. Its pathway is pyrimidine metabolism; UMP biosynthesis via de novo pathway; UMP from orotate: step 2/2. Its function is as follows. Catalyzes the decarboxylation of orotidine 5'-monophosphate (OMP) to uridine 5'-monophosphate (UMP). The protein is Orotidine 5'-phosphate decarboxylase of Neisseria meningitidis serogroup A / serotype 4A (strain DSM 15465 / Z2491).